An 89-amino-acid chain; its full sequence is uncharacterized protein (89 aa).

The protein to Rhizobium NGR234A y4oN.

This is an uncharacterized protein from Sinorhizobium fredii (strain NBRC 101917 / NGR234).